The sequence spans 103 residues: Large ribosomal subunit protein uL24 (103 aa).

This sequence belongs to the universal ribosomal protein uL24 family. In terms of assembly, part of the 50S ribosomal subunit.

Its function is as follows. One of two assembly initiator proteins, it binds directly to the 5'-end of the 23S rRNA, where it nucleates assembly of the 50S subunit. In terms of biological role, one of the proteins that surrounds the polypeptide exit tunnel on the outside of the subunit. The sequence is that of Large ribosomal subunit protein uL24 from Pediococcus pentosaceus (strain ATCC 25745 / CCUG 21536 / LMG 10740 / 183-1w).